A 91-amino-acid polypeptide reads, in one-letter code: Large ribosomal subunit protein bL27 (91 aa).

The protein belongs to the bacterial ribosomal protein bL27 family.

The sequence is that of Large ribosomal subunit protein bL27 from Pseudomonas savastanoi pv. phaseolicola (strain 1448A / Race 6) (Pseudomonas syringae pv. phaseolicola (strain 1448A / Race 6)).